Here is a 645-residue protein sequence, read N- to C-terminus: Chlorophyllide a oxygenase, chloroplastic (645 aa).

Positions 1–46 (MLPASLQRKAAAVGGRGPTNQSRVAVRVSAQPKEAPPASTPIVEDP) are disordered. The stretch at 105–218 (QARQKLEYLR…RKASDLDIKE (114 aa)) forms a coiled coil. The segment at 258–287 (ATTVTQEVPSTSYGTPVDRAPRRSKAAIRR) is disordered. Over residues 259–271 (TTVTQEVPSTSYG) the composition is skewed to polar residues. The 102-residue stretch at 305 to 406 (WYPAEFSARL…CAEKDGFIWV (102 aa)) folds into the Rieske domain. [2Fe-2S] cluster is bound by residues cysteine 346, histidine 348, cysteine 365, and histidine 368. Residues glutamate 446, aspartate 450, histidine 453, and histidine 458 each coordinate Fe cation.

The protein localises to the plastid. It localises to the chloroplast inner membrane. It is found in the chloroplast thylakoid membrane. The enzyme catalyses chlorophyllide a + 2 NADPH + 2 O2 + 2 H(+) = chlorophyllide b + 2 NADP(+) + 3 H2O. Catalyzes a two-step oxygenase reaction involved in the synthesis of chlorophyll b. Acts specifically on the non-esterified chlorophyllide a and not on chlorophyll a. This chain is Chlorophyllide a oxygenase, chloroplastic (CAO), found in Chlamydomonas reinhardtii (Chlamydomonas smithii).